The following is a 164-amino-acid chain: UPF0304 protein CKO_00501 (164 aa).

This sequence belongs to the UPF0304 family.

The polypeptide is UPF0304 protein CKO_00501 (Citrobacter koseri (strain ATCC BAA-895 / CDC 4225-83 / SGSC4696)).